The primary structure comprises 192 residues: uncharacterized protein (192 aa).

The N-terminal stretch at 1–18 (MNSKFILKYFILAFFLVS) is a signal peptide. Residue cysteine 19 is the site of N-palmitoyl cysteine attachment. Cysteine 19 carries the S-diacylglycerol cysteine lipid modification.

It is found in the cell membrane. This is an uncharacterized protein from Borreliella burgdorferi (strain ATCC 35210 / DSM 4680 / CIP 102532 / B31) (Borrelia burgdorferi).